We begin with the raw amino-acid sequence, 356 residues long: Protein RecA (356 aa).

68 to 75 (GQESSGKT) serves as a coordination point for ATP.

It belongs to the RecA family.

It localises to the cytoplasm. Its function is as follows. Can catalyze the hydrolysis of ATP in the presence of single-stranded DNA, the ATP-dependent uptake of single-stranded DNA by duplex DNA, and the ATP-dependent hybridization of homologous single-stranded DNAs. It interacts with LexA causing its activation and leading to its autocatalytic cleavage. In Thermotoga petrophila (strain ATCC BAA-488 / DSM 13995 / JCM 10881 / RKU-1), this protein is Protein RecA.